The sequence spans 534 residues: UDP-glucuronosyltransferase 1A3 (534 aa).

An N-terminal signal peptide occupies residues Met1–Ser28. Asn119, Asn142, Asn296, and Asn348 each carry an N-linked (GlcNAc...) asparagine glycan. The helical transmembrane segment at Val492–Phe508 threads the bilayer.

It belongs to the UDP-glycosyltransferase family. In terms of assembly, homodimer. Homooligomer. Interacts with UGT1A1, UGT1A4, UGT1A6, UGT1A7, UGT1A8, UGT1A9 and UGT1A10 to form heterodimers. Isoform 1 interacts with isoform 2/i2 suggesting that oligomerization is involved in negative regulation of transferase activity by isoform 2. Isoform 1 also interacts with respective i2 isoforms of UGT1A1, UGT1A4, UGT1A6, UGT1A7, UGT1A8, UGT1A9 and UGT1A10. In terms of tissue distribution, expressed in liver, kidney, colon, esophagus and small intestine. Expressed in liver, kidney and colon. Not expressed in esophagus and small intestine.

Its subcellular location is the endoplasmic reticulum membrane. It catalyses the reaction glucuronate acceptor + UDP-alpha-D-glucuronate = acceptor beta-D-glucuronoside + UDP + H(+). The catalysed reaction is 17beta-estradiol + UDP-alpha-D-glucuronate = 17beta-estradiol 3-O-(beta-D-glucuronate) + UDP + H(+). The enzyme catalyses 17beta-estradiol + UDP-alpha-D-glucuronate = 17beta-estradiol 17-O-(beta-D-glucuronate) + UDP + H(+). It carries out the reaction 17alpha-estradiol + UDP-alpha-D-glucuronate = 17alpha-estradiol 3-O-(beta-D-glucuronate) + UDP + H(+). It catalyses the reaction estrone + UDP-alpha-D-glucuronate = estrone 3-O-(beta-D-glucuronate) + UDP + H(+). The catalysed reaction is chenodeoxycholate + UDP-alpha-D-glucuronate = chenodeoxycholoyl-24-O-(beta-D-glucuronate) + UDP. The enzyme catalyses deoxycholate + UDP-alpha-D-glucuronate = deoxycholoyl-24-O-(beta-D-glucuronate) + UDP. It carries out the reaction lithocholate + UDP-alpha-D-glucuronate = lithocholoyl-24-O-(beta-D-glucuronate) + UDP. It catalyses the reaction hyodeoxycholate + UDP-alpha-D-glucuronate = hyodeoxycholoyl-24-O-(beta-D-glucuronate) + UDP. The catalysed reaction is hyocholate + UDP-alpha-D-glucuronate = hyocholoyl-24-O-(beta-D-glucuronate) + UDP. The enzyme catalyses calcidiol + UDP-alpha-D-glucuronate = calcidiol 25-O-(beta-D-glucuronide) + UDP + H(+). It carries out the reaction (E)-ferulate + UDP-alpha-D-glucuronate = (E)-4-O-(beta-D-glucuronosyl)-ferulate + UDP + H(+). It catalyses the reaction (E)-ferulate + UDP-alpha-D-glucuronate = (E)-ferulic acid beta-D-glucuronate ester + UDP. The catalysed reaction is losartan + UDP-alpha-D-glucuronate = losartan-2-N-beta-D-glucuronide + UDP. The enzyme catalyses candesartan + UDP-alpha-D-glucuronate = candesartan-2-N-beta-D-glucuronide + UDP. It carries out the reaction zolasartan + UDP-alpha-D-glucuronate = zolarsartan-2-N-beta-D-glucuronide + UDP. Its function is as follows. UDP-glucuronosyltransferase (UGT) that catalyzes phase II biotransformation reactions in which lipophilic substrates are conjugated with glucuronic acid to increase the metabolite's water solubility, thereby facilitating excretion into either the urine or bile. Essential for the elimination and detoxification of drugs, xenobiotics and endogenous compounds. Catalyzes the glucuronidation of endogenous estrogen hormones such as estradiol and estrone. Contributes to bile acid (BA) detoxification by catalyzing the glucuronidation of BA substrates, which are natural detergents for dietary lipids absorption. Involved in the glucuronidation of calcidiol, which is the major circulating form of vitamin D3, essential for the regulation of calcium and phosphate homeostasis. Involved in the glucuronidation of the phytochemical ferulic acid at the phenolic or the carboxylic acid group. Involved in the glucuronidation of the AGTR1 angiotensin receptor antagonists losartan, candesartan and zolarsartan, which can inhibit the effect of angiotensin II. Functionally, lacks UDP-glucuronosyltransferase (UGT) activity but acts as a negative regulator of isoform 1. The sequence is that of UDP-glucuronosyltransferase 1A3 from Homo sapiens (Human).